A 139-amino-acid chain; its full sequence is Large ribosomal subunit protein uL16 (139 aa).

A compositionally biased stretch (basic residues) spans 1–17 (MLIPRKVKHRKQHHPGR). Positions 1–24 (MLIPRKVKHRKQHHPGRTGHATGG) are disordered.

It belongs to the universal ribosomal protein uL16 family. As to quaternary structure, part of the 50S ribosomal subunit.

Binds 23S rRNA and is also seen to make contacts with the A and possibly P site tRNAs. This Clavibacter michiganensis subsp. michiganensis (strain NCPPB 382) protein is Large ribosomal subunit protein uL16.